A 273-amino-acid chain; its full sequence is Protein FAM210A (273 aa).

Residues 97–106 (SSSATSSGPP) are compositionally biased toward low complexity. A disordered region spans residues 97 to 116 (SSSATSSGPPSEKKEDPDPL). Residues 107–116 (SEKKEDPDPL) are compositionally biased toward basic and acidic residues. A DUF1279 domain is found at 118 to 230 (DRSISLYQRF…GYMSTPPPVK (113 aa)). Residues 137-157 (VLIPVHLITSAVWFGTFYYAA) form a helical membrane-spanning segment. The stretch at 230–269 (KEYLQDKMEETKELLTEKMEETKDRLTEKLQETKGKVSLK) forms a coiled coil. Residues 247 to 273 (KMEETKDRLTEKLQETKGKVSLKKKVE) form a disordered region.

The protein belongs to the FAM210 family. Interacts with ATAD3A.

The protein resides in the membrane. It localises to the mitochondrion. It is found in the cytoplasm. Its function is as follows. May play a role in the structure and strength of both muscle and bone. The sequence is that of Protein FAM210A (FAM210A) from Bos taurus (Bovine).